A 100-amino-acid chain; its full sequence is Acylphosphatase (100 aa).

An Acylphosphatase-like domain is found at Arg14–Arg100. Active-site residues include Arg29 and Asn47.

This sequence belongs to the acylphosphatase family.

It catalyses the reaction an acyl phosphate + H2O = a carboxylate + phosphate + H(+). The sequence is that of Acylphosphatase (acyP) from Nocardia farcinica (strain IFM 10152).